The following is a 212-amino-acid chain: MKLSKYIDHTLLKPQATEKDILKLIEEAKTYDFASVCVNPSWVKLAYENLKDTDVKVCTVVGFPLGATSTASKVYETKVAIEDGADEIDMVISVGQLKSGNDEYVKEEIKKIVEASKNKLVKVIIETCLLTEEEKVKACTLSKEAGADYVKTSTGFSTGGAKPEDIKLMRETVGKDMGVKASGGIHTKEEMEAMIENGATRIGASCGVQLVR.

Aspartate 89 functions as the Proton donor/acceptor in the catalytic mechanism. Lysine 151 (schiff-base intermediate with acetaldehyde) is an active-site residue. The active-site Proton donor/acceptor is the lysine 180.

It belongs to the DeoC/FbaB aldolase family. DeoC type 1 subfamily.

It is found in the cytoplasm. The catalysed reaction is 2-deoxy-D-ribose 5-phosphate = D-glyceraldehyde 3-phosphate + acetaldehyde. The protein operates within carbohydrate degradation; 2-deoxy-D-ribose 1-phosphate degradation; D-glyceraldehyde 3-phosphate and acetaldehyde from 2-deoxy-alpha-D-ribose 1-phosphate: step 2/2. Catalyzes a reversible aldol reaction between acetaldehyde and D-glyceraldehyde 3-phosphate to generate 2-deoxy-D-ribose 5-phosphate. The protein is Deoxyribose-phosphate aldolase of Clostridium botulinum (strain Langeland / NCTC 10281 / Type F).